A 917-amino-acid chain; its full sequence is Intercellular adhesion molecule 5 (917 aa).

The signal sequence occupies residues 1–31 (MPGPSPGLRRALLGLWAALGLGILGISAVAL). Over 32 to 833 (EPFWADLQPR…RITVRVAGPW (802 aa)) the chain is Extracellular. Ig-like C2-type domains lie at 48 to 130 (GGSL…PLPS), 135 to 235 (GENF…SLIA), 242 to 329 (DSER…LLTL), 337 to 402 (GKMV…SSEL), 408 to 486 (PRLD…VTLT), 491 to 567 (PALD…VAVT), 572 to 651 (PSFE…NRHG), 665 to 738 (PQMD…RTVT), and 745 to 828 (PVVA…ITVR). Asparagine 54 is a glycosylation site (N-linked (GlcNAc...) (high mannose) asparagine). 2 disulfides stabilise this stretch: cysteine 55-cysteine 99 and cysteine 59-cysteine 103. Asparagine 74 and asparagine 137 each carry an N-linked (GlcNAc...) asparagine glycan. Cysteine 142 and cysteine 198 form a disulfide bridge. Threonine 182 carries the phosphothreonine modification. N-linked (GlcNAc...) asparagine glycosylation is found at asparagine 195, asparagine 214, asparagine 274, asparagine 316, asparagine 371, and asparagine 397. A disulfide bridge connects residues cysteine 249 and cysteine 302. A disulfide bond links cysteine 344 and cysteine 383. Intrachain disulfides connect cysteine 415-cysteine 470, cysteine 498-cysteine 551, and cysteine 579-cysteine 644. N-linked (GlcNAc...) asparagine glycans are attached at residues asparagine 582 and asparagine 645. The cysteines at positions 672 and 724 are disulfide-linked. Asparagine 762, asparagine 793, and asparagine 794 each carry an N-linked (GlcNAc...) asparagine glycan. Cysteine 767 and cysteine 812 are disulfide-bonded. A helical transmembrane segment spans residues 834 to 854 (LWVAVGGAAGGAALLAAGAGL). The Cytoplasmic segment spans residues 855-917 (AFYVQSTACK…EVFAIQLTSS (63 aa)). Gly residues predominate over residues 884 to 893 (GAGGTPGAEG). The segment at 884-908 (GAGGTPGAEGGAETPGTAESPADGE) is disordered.

The protein belongs to the immunoglobulin superfamily. ICAM family. Post-translationally, glycosylation at Asn-54 is critical for functional folding. Expressed on neurons in the most rostral segment of the mammalian brain, the telencephalon.

The protein localises to the membrane. Its function is as follows. ICAM proteins are ligands for the leukocyte adhesion protein LFA-1 (integrin alpha-L/beta-2). The polypeptide is Intercellular adhesion molecule 5 (Icam5) (Mus musculus (Mouse)).